The following is a 420-amino-acid chain: Serine hydroxymethyltransferase (420 aa).

Residues leucine 121 and 125–127 each bind (6S)-5,6,7,8-tetrahydrofolate; that span reads GHL. Lysine 230 is modified (N6-(pyridoxal phosphate)lysine). 355–357 provides a ligand contact to (6S)-5,6,7,8-tetrahydrofolate; sequence SPF.

This sequence belongs to the SHMT family. As to quaternary structure, homodimer. Pyridoxal 5'-phosphate serves as cofactor.

Its subcellular location is the cytoplasm. It catalyses the reaction (6R)-5,10-methylene-5,6,7,8-tetrahydrofolate + glycine + H2O = (6S)-5,6,7,8-tetrahydrofolate + L-serine. It participates in one-carbon metabolism; tetrahydrofolate interconversion. Its pathway is amino-acid biosynthesis; glycine biosynthesis; glycine from L-serine: step 1/1. Functionally, catalyzes the reversible interconversion of serine and glycine with tetrahydrofolate (THF) serving as the one-carbon carrier. This reaction serves as the major source of one-carbon groups required for the biosynthesis of purines, thymidylate, methionine, and other important biomolecules. Also exhibits THF-independent aldolase activity toward beta-hydroxyamino acids, producing glycine and aldehydes, via a retro-aldol mechanism. In Streptococcus gordonii (strain Challis / ATCC 35105 / BCRC 15272 / CH1 / DL1 / V288), this protein is Serine hydroxymethyltransferase.